The sequence spans 225 residues: Biosynthetic peptidoglycan transglycosylase (225 aa).

A helical membrane pass occupies residues 9 to 29 (LLIFIGAILLIQLWIFSSLVW).

This sequence belongs to the glycosyltransferase 51 family.

Its subcellular location is the cell inner membrane. It carries out the reaction [GlcNAc-(1-&gt;4)-Mur2Ac(oyl-L-Ala-gamma-D-Glu-L-Lys-D-Ala-D-Ala)](n)-di-trans,octa-cis-undecaprenyl diphosphate + beta-D-GlcNAc-(1-&gt;4)-Mur2Ac(oyl-L-Ala-gamma-D-Glu-L-Lys-D-Ala-D-Ala)-di-trans,octa-cis-undecaprenyl diphosphate = [GlcNAc-(1-&gt;4)-Mur2Ac(oyl-L-Ala-gamma-D-Glu-L-Lys-D-Ala-D-Ala)](n+1)-di-trans,octa-cis-undecaprenyl diphosphate + di-trans,octa-cis-undecaprenyl diphosphate + H(+). It functions in the pathway cell wall biogenesis; peptidoglycan biosynthesis. Peptidoglycan polymerase that catalyzes glycan chain elongation from lipid-linked precursors. The polypeptide is Biosynthetic peptidoglycan transglycosylase (Acinetobacter baumannii (strain SDF)).